The following is a 261-amino-acid chain: Triosephosphate isomerase (261 aa).

10–12 (NWK) contributes to the substrate binding site. The active-site Electrophile is His100. Glu172 serves as the catalytic Proton acceptor. Residues Gly178, Ser218, and 239 to 240 (GG) contribute to the substrate site.

This sequence belongs to the triosephosphate isomerase family. As to quaternary structure, homodimer.

The protein resides in the cytoplasm. The enzyme catalyses D-glyceraldehyde 3-phosphate = dihydroxyacetone phosphate. Its pathway is carbohydrate biosynthesis; gluconeogenesis. It functions in the pathway carbohydrate degradation; glycolysis; D-glyceraldehyde 3-phosphate from glycerone phosphate: step 1/1. Its function is as follows. Involved in the gluconeogenesis. Catalyzes stereospecifically the conversion of dihydroxyacetone phosphate (DHAP) to D-glyceraldehyde-3-phosphate (G3P). The chain is Triosephosphate isomerase from Mycobacterium sp. (strain JLS).